Reading from the N-terminus, the 46-residue chain is Viscotoxin-A2 (46 aa).

3 disulfides stabilise this stretch: Cys-3-Cys-40, Cys-4-Cys-32, and Cys-16-Cys-26.

This sequence belongs to the plant thionin (TC 1.C.44) family.

It is found in the secreted. In terms of biological role, thionins are small plant proteins which are toxic to animal cells. They seem to exert their toxic effect at the level of the cell membrane. Their precise function is not known. This Viscum album (European mistletoe) protein is Viscotoxin-A2 (THI2.3).